The chain runs to 197 residues: Small ribosomal subunit protein uS4B (197 aa).

Positions 88-151 constitute an S4 RNA-binding domain; that stretch reads CRLDNIAYRI…RKNDEFADNF (64 aa).

The protein belongs to the universal ribosomal protein uS4 family. Part of the 30S ribosomal subunit. Contacts protein S5. The interaction surface between S4 and S5 is involved in control of translational fidelity.

Its function is as follows. One of the primary rRNA binding proteins, it binds directly to 16S rRNA where it nucleates assembly of the body of the 30S subunit. Functionally, with S5 and S12 plays an important role in translational accuracy. The protein is Small ribosomal subunit protein uS4B of Clostridium botulinum (strain Hall / ATCC 3502 / NCTC 13319 / Type A).